Consider the following 418-residue polypeptide: MKRERGALSRASRALRLSPFVYLLLIQPVPLEGVNITSPVRLIHGTVGKSALLSVQYSSTSSDKPVVKWQLKRDKPVTVVQSIGTEVIGTLRPDYRDRIRLFENGSLLLSDLQLADEGTYEVEISITDDTFTGEKTINLTVDVPISRPQVLVASTTVLELSEAFTLNCSHENGTKPSYTWLKDGKPLLNDSRMLLSPDQKVLTITRVLMEDDDLYSCVVENPISQVRSLPVKITVYRRSSLYIILSTGGIFLLVTLVTVCACWKPSKKSRKKRKLEKQNSLEYMDQNDDRLKSEADTLPRSGEQERKNPMALYILKDKDSSEPDENPATEPRSTTEPGPPGYSVSPPVPGRSPGLPIRSARRYPRSPARSPATGRTHTSPPRAPSSPGRSRSSSRSLRTAGVQRIREQDESGQVEISA.

The N-terminal stretch at 1–33 (MKRERGALSRASRALRLSPFVYLLLIQPVPLEG) is a signal peptide. The Ig-like V-type domain occupies 34-142 (VNITSPVRLI…GEKTINLTVD (109 aa)). Topologically, residues 34–240 (VNITSPVRLI…VKITVYRRSS (207 aa)) are extracellular. 4 N-linked (GlcNAc...) asparagine glycosylation sites follow: asparagine 35, asparagine 138, asparagine 167, and asparagine 189. In terms of domain architecture, Ig-like C2-type spans 148–234 (PQVLVASTTV…QVRSLPVKIT (87 aa)). An intrachain disulfide couples cysteine 168 to cysteine 217. The helical transmembrane segment at 241 to 261 (LYIILSTGGIFLLVTLVTVCA) threads the bilayer. Topologically, residues 262-418 (CWKPSKKSRK…DESGQVEISA (157 aa)) are cytoplasmic. A disordered region spans residues 271–418 (KKRKLEKQNS…DESGQVEISA (148 aa)). Position 280 is a phosphoserine (serine 280). The span at 287–308 (NDDRLKSEADTLPRSGEQERKN) shows a compositional bias: basic and acidic residues. Residues serine 321, serine 352, and serine 379 each carry the phosphoserine modification. The span at 341 to 358 (GYSVSPPVPGRSPGLPIR) shows a compositional bias: low complexity. The span at 385–396 (SSPGRSRSSSRS) shows a compositional bias: low complexity.

Homodimer. Dimer formation occurs predominantly through cis interactions on the cell surface. Part of a complex containing MLC1, TRPV4, AQP4 and ATP1B1. Interacts with CLCN2. N-glycosylated.

Its subcellular location is the cytoplasm. The protein resides in the cell membrane. Involved in regulating cell motility and cell-matrix interactions. May inhibit cell growth through suppression of cell proliferation. In glia, associates and targets CLCN2 at astrocytic processes and myelinated fiber tracts where it may regulate transcellular chloride flux involved in neuron excitability. In Mus musculus (Mouse), this protein is Hepatic and glial cell adhesion molecule.